The following is a 459-amino-acid chain: tRNA-guanine(15) transglycosylase (459 aa).

The active-site Nucleophile is Asp90. Residues Asp125 and Gly192 each contribute to the substrate site. Cys275, Cys277, and Cys280 together coordinate Zn(2+).

This sequence belongs to the archaeosine tRNA-ribosyltransferase family. It depends on Zn(2+) as a cofactor.

It carries out the reaction guanosine(15) in tRNA + 7-cyano-7-deazaguanine = 7-cyano-7-carbaguanosine(15) in tRNA + guanine. It functions in the pathway tRNA modification; archaeosine-tRNA biosynthesis. Functionally, exchanges the guanine residue with 7-cyano-7-deazaguanine (preQ0) at position 15 in the dihydrouridine loop (D-loop) of archaeal tRNAs. This Methanopyrus kandleri (strain AV19 / DSM 6324 / JCM 9639 / NBRC 100938) protein is tRNA-guanine(15) transglycosylase.